Here is a 730-residue protein sequence, read N- to C-terminus: Stonin-1 (730 aa).

3 disordered regions span residues 1–26 (MYST…KRKD), 38–83 (NGLK…PLST), and 132–159 (SPHV…AGPQ). Composition is skewed to low complexity over residues 54–65 (PSSASSTPLSSP) and 132–143 (SPHVSLPSSHSH). The SHD domain occupies 269–402 (GWSFMLRIPE…KLPATAKPKN (134 aa)). The MHD domain occupies 407-710 (EQEICLDIQD…ACYNIQVEIE (304 aa)).

It belongs to the Stoned B family.

It is found in the cytoplasm. The protein resides in the membrane. Its function is as follows. May be involved in the endocytic machinery. This Mus musculus (Mouse) protein is Stonin-1 (Ston1).